Here is a 350-residue protein sequence, read N- to C-terminus: tRNA pseudouridine synthase D (350 aa).

Phe-27 serves as a coordination point for substrate. Asp-80 functions as the Nucleophile in the catalytic mechanism. Asn-129 provides a ligand contact to substrate. One can recognise a TRUD domain in the interval 155 to 303 (GVPNYFGVQR…VDTTRRAINL (149 aa)). Phe-329 serves as a coordination point for substrate.

This sequence belongs to the pseudouridine synthase TruD family.

The enzyme catalyses uridine(13) in tRNA = pseudouridine(13) in tRNA. Its function is as follows. Responsible for synthesis of pseudouridine from uracil-13 in transfer RNAs. This chain is tRNA pseudouridine synthase D, found in Proteus mirabilis (strain HI4320).